Reading from the N-terminus, the 116-residue chain is Phosphoribosyl-ATP pyrophosphatase (116 aa).

Belongs to the PRA-PH family.

The protein localises to the cytoplasm. The catalysed reaction is 1-(5-phospho-beta-D-ribosyl)-ATP + H2O = 1-(5-phospho-beta-D-ribosyl)-5'-AMP + diphosphate + H(+). It functions in the pathway amino-acid biosynthesis; L-histidine biosynthesis; L-histidine from 5-phospho-alpha-D-ribose 1-diphosphate: step 2/9. This is Phosphoribosyl-ATP pyrophosphatase from Nitrobacter winogradskyi (strain ATCC 25391 / DSM 10237 / CIP 104748 / NCIMB 11846 / Nb-255).